The sequence spans 465 residues: uncharacterized protein (465 aa).

A run of 11 helical transmembrane segments spans residues 19 to 39, 50 to 70, 91 to 111, 140 to 160, 164 to 184, 201 to 221, 244 to 264, 288 to 308, 342 to 362, 363 to 383, and 403 to 423; these read VLGP…GEYM, MIAG…VAMI, IVGP…YTML, FIVL…LATL, LVIT…VQFG, PYGW…YLGI, AGIM…SGLM, LMVL…NGCI, IVFL…DQVV, TFSI…MVMF, and LPTV…FLGY.

The protein belongs to the amino acid-polyamine-organocation (APC) superfamily.

It is found in the cell membrane. Its function is as follows. Probable amino-acid or metabolite transport protein. This is an uncharacterized protein from Rhizobium meliloti (strain 1021) (Ensifer meliloti).